The sequence spans 117 residues: DNA-binding protein VNG_2008H (117 aa).

Residues Met1–Arg59 form a disordered region. Residues Glu11–Leu21 show a composition bias toward basic and acidic residues. A compositionally biased stretch (low complexity) spans Gln35 to Ala48.

It belongs to the PDCD5 family.

The protein is DNA-binding protein VNG_2008H of Halobacterium salinarum (strain ATCC 700922 / JCM 11081 / NRC-1) (Halobacterium halobium).